Consider the following 730-residue polypeptide: Actin filament-associated protein 1 (730 aa).

M1 carries the N-acetylmethionine modification. Positions 47–91 are disordered; it reads KDHAQKQETANSLPAPPQMPLPEIPQPWLPPDSGPPPLPTSSLPE. The span at 60 to 85 shows a compositional bias: pro residues; sequence PAPPQMPLPEIPQPWLPPDSGPPPLP. The SH3-binding motif lies at 71–74; sequence PQPW. The SH2-binding 1 motif lies at 94–97; the sequence is YEEA. The interval 119–140 is disordered; it reads SSSYESYDEEEEDGKGKKTRHQ. In terms of domain architecture, PH 1 spans 153–249; sequence DAKICAFLLR…WLKVIKEAYS (97 aa). Residues 252–292 form a disordered region; the sequence is SGPVDSECPPPPSSPVHKAELEKKLSSERPSSDGEGVVENG. Residues 268-283 show a composition bias toward basic and acidic residues; it reads HKAELEKKLSSERPSS. Phosphoserine is present on residues S282 and S283. The 95-residue stretch at 347-441 folds into the PH 2 domain; the sequence is DVPTCGYLNV…WIGILLAETG (95 aa). An SH2-binding 2 motif is present at residues 451–456; sequence YDYIDV. The tract at residues 512 to 537 is disordered; sequence KGKKPPVASNGVTGKGKTLSSQPKKA. S548 bears the Phosphoserine mark. A coiled-coil region spans residues 557-648; it reads KNRVEADAKR…VKESLKKALA (92 aa). Residues 594–637 are interaction with F-actin; the sequence is DLRAAIEVNAGRKPQAILEEKLKQLEEECRQKEAERVSLELELT. S664, S665, and S668 each carry phosphoserine. T675 is subject to Phosphothreonine. A phosphoserine mark is found at S679 and S687.

Monomer and homomultimer. Interacts via its C-terminus with F-actin; probably involving AFAP1 multimers. Interacts with activated SRC SH3-SH2 domains. Interacts via its PH 1 domain with PRKCA, PRKCB and PRKCI. Phosphorylated on tyrosine residues by SRC. As to expression, low expression in normal breast epithelial cell line MCF-10A and in tumorigenic breast cancer cell lines MCF-7, T-47D and ZR-75-1. Highly expressed in the invasive breast cancer cell lines MDA-MB-231 and MDA-MB-435. Overexpressed in prostate carcinoma.

Its subcellular location is the cytoplasm. It localises to the cytoskeleton. It is found in the stress fiber. Can cross-link actin filaments into both network and bundle structures. May modulate changes in actin filament integrity and induce lamellipodia formation. May function as an adapter molecule that links other proteins, such as SRC and PKC to the actin cytoskeleton. Seems to play a role in the development and progression of prostate adenocarcinoma by regulating cell-matrix adhesions and migration in the cancer cells. In Homo sapiens (Human), this protein is Actin filament-associated protein 1 (AFAP1).